Here is a 756-residue protein sequence, read N- to C-terminus: MSAKNAKKQPNNSVEFLIDDDYGITEAIATLDNGDFGTRTIRFETGQLARQAGGSVTTYLDEDTMLLSTTTASNQPREGFDFFPLTVDVEERMYAAGKIPGSFFRREGRPSTEAILACRLIDRPLRPTFVKGLRNEVQVVVTVLSMDPEEYYDVVAINGASASTQLSGLPVSGPVGGVRMALIADDKHPKGQWVAFPNNEQHERALFEMVVAGRIVKKGRKDDVAIMMVEAGAGVNVAERIKEGAPAPQESTVAEGLEAAKPFIKSLCEAQAGLAERAAKETQEFPLFPPYGDDVYAAVEKAASKKLEKLLTIPGKQDRDDATNEYMEQVEAKLIEDFDDLDEADASKQIRNAFNAVMKDIVRTKILTEGFRIDGRGVTDIRDLGVEVDLIPRAHGSSLFERGETQILGVTTLDMLKMEQQIDSLTPVESKRYMHHYNFPPYSTGETGRVGSPKRREIGHGALAERALLPVIPSREDFPYAIRQVSEALGSNGSTSMGSVCASTLSLYNAGVPLKAPVAGIAMGLVSGEVNGKEKFVALTDILGAEDAFGDMDFKVAGTSEFITALQLDTKLDGIPSHVLADALEQARDARAAILDTMSEVIESPDEMSGLAPRITSVTIPVNKIGELIGPKGKTINAITEETGADVSIEEDGTVYISAATGEAADAAIDRVNSIANPQLPKVGERFLGTVVKTVAFGAFVSLTPGRDGLVHISKLGGDERIEKVEDVVNVGDKIQVEIADIDNRGKISLVPVEED.

Positions 547 and 553 each coordinate Mg(2+). One can recognise a KH domain in the interval 613-672 (PRITSVTIPVNKIGELIGPKGKTINAITEETGADVSIEEDGTVYISAATGEAADAAIDRV). The S1 motif domain occupies 684–753 (GERFLGTVVK…NRGKISLVPV (70 aa)).

The protein belongs to the polyribonucleotide nucleotidyltransferase family. It depends on Mg(2+) as a cofactor.

It localises to the cytoplasm. The catalysed reaction is RNA(n+1) + phosphate = RNA(n) + a ribonucleoside 5'-diphosphate. In terms of biological role, involved in mRNA degradation. Catalyzes the phosphorolysis of single-stranded polyribonucleotides processively in the 3'- to 5'-direction. In Corynebacterium aurimucosum (strain ATCC 700975 / DSM 44827 / CIP 107346 / CN-1) (Corynebacterium nigricans), this protein is Polyribonucleotide nucleotidyltransferase.